The following is a 1407-amino-acid chain: JmjC domain-containing histone demethylation protein 1 (1407 aa).

Disordered stretches follow at residues 1-86 (MISA…SSTI) and 98-151 (PTFT…NAFS). Composition is skewed to basic and acidic residues over residues 55–67 (DHVRSTPTDKRPS) and 125–140 (PVERPAKRPRSERDES). The span at 141–150 (SYTQHRSNAF) shows a compositional bias: polar residues. A PHD-type zinc finger spans residues 323–382 (QASCATCNLVRIPVDNEDQDVTWISCDGCKRWFHIVCAGFKNDRETRTVDKFICKTCRPI). One can recognise a JmjC domain in the interval 577-735 (VSQSKLGRLI…MQIKIAKIEK (159 aa)). T628 contributes to the substrate binding site. Fe cation-binding residues include H631 and D633. K648 is a substrate binding site. Residue H703 coordinates Fe cation. Disordered stretches follow at residues 893 to 987 (KLSL…LGPK), 1004 to 1027 (KEENNGASGSQMTVSTSSLGHHTP), 1122 to 1183 (IKAQ…QDSV), and 1252 to 1389 (DEMD…SLRL). Composition is skewed to basic and acidic residues over residues 896–914 (LAEKRPAGRPSRRSERNAD) and 928–938 (LSERPAVDIQK). The segment covering 1008–1027 (NGASGSQMTVSTSSLGHHTP) has biased composition (polar residues). A compositionally biased stretch (basic and acidic residues) spans 1254–1264 (MDIHDQVDAGG). The segment covering 1273–1284 (PSSGSRQSSRQP) has biased composition (low complexity). Basic and acidic residues predominate over residues 1285–1296 (RQVERYMPEVHF). Residues 1297–1349 (AKTAKSTTTTPQTTRRSSFGSSGRKTTPGLSSGSKKSGSRPSSSHGKKSLSPS) are compositionally biased toward low complexity.

It belongs to the JHDM1 histone demethylase family. The cofactor is Fe(2+).

The protein resides in the nucleus. The catalysed reaction is N(6),N(6)-dimethyl-L-lysyl(36)-[histone H3] + 2 2-oxoglutarate + 2 O2 = L-lysyl(36)-[histone H3] + 2 formaldehyde + 2 succinate + 2 CO2. Its function is as follows. Histone demethylase that specifically demethylates 'Lys-36' of histone H3, thereby playing a central role in histone code. In Emericella nidulans (strain FGSC A4 / ATCC 38163 / CBS 112.46 / NRRL 194 / M139) (Aspergillus nidulans), this protein is JmjC domain-containing histone demethylation protein 1 (jhd1).